We begin with the raw amino-acid sequence, 249 residues long: Chitooligosaccharide deacetylase (249 aa).

Positions 61 and 125 each coordinate Mg(2+).

Belongs to the YdjC deacetylase family. ChbG subfamily. In terms of assembly, homodimer. The cofactor is Mg(2+).

The protein localises to the cytoplasm. The enzyme catalyses N,N'-diacetylchitobiose + H2O = N-acetyl-beta-D-glucosaminyl-(1-&gt;4)-D-glucosamine + acetate. It carries out the reaction diacetylchitobiose-6'-phosphate + H2O = N'-monoacetylchitobiose-6'-phosphate + acetate. The protein operates within glycan degradation; chitin degradation. Its function is as follows. Involved in the degradation of chitin. ChbG is essential for growth on the acetylated chitooligosaccharides chitobiose and chitotriose but is dispensable for growth on cellobiose and chitosan dimer, the deacetylated form of chitobiose. Deacetylation of chitobiose-6-P and chitotriose-6-P is necessary for both the activation of the chb promoter by the regulatory protein ChbR and the hydrolysis of phosphorylated beta-glucosides by the phospho-beta-glucosidase ChbF. Catalyzes the removal of only one acetyl group from chitobiose-6-P to yield monoacetylchitobiose-6-P, the inducer of ChbR and the substrate of ChbF. The polypeptide is Chitooligosaccharide deacetylase (Escherichia coli O9:H4 (strain HS)).